The sequence spans 367 residues: Phosphoribosylaminoimidazole-succinocarboxamide synthase (367 aa).

Belongs to the SAICAR synthetase family.

It carries out the reaction 5-amino-1-(5-phospho-D-ribosyl)imidazole-4-carboxylate + L-aspartate + ATP = (2S)-2-[5-amino-1-(5-phospho-beta-D-ribosyl)imidazole-4-carboxamido]succinate + ADP + phosphate + 2 H(+). Its pathway is purine metabolism; IMP biosynthesis via de novo pathway; 5-amino-1-(5-phospho-D-ribosyl)imidazole-4-carboxamide from 5-amino-1-(5-phospho-D-ribosyl)imidazole-4-carboxylate: step 1/2. This chain is Phosphoribosylaminoimidazole-succinocarboxamide synthase, found in Shewanella baltica (strain OS155 / ATCC BAA-1091).